The primary structure comprises 266 residues: uncharacterized protein (266 aa).

4 consecutive transmembrane segments (helical) span residues Ile-9–Pro-29, Gly-79–Phe-99, Leu-122–Gly-142, and Gly-193–Ile-213.

It is found in the membrane. This is an uncharacterized protein from Dictyostelium discoideum (Social amoeba).